Consider the following 196-residue polypeptide: Imidazole glycerol phosphate synthase subunit HisH (196 aa).

In terms of domain architecture, Glutamine amidotransferase type-1 spans 2–196; the sequence is NVVILDTGCA…AQLLKNFLEM (195 aa). Cysteine 77 (nucleophile) is an active-site residue. Residues histidine 178 and glutamate 180 contribute to the active site.

In terms of assembly, heterodimer of HisH and HisF.

It is found in the cytoplasm. The catalysed reaction is 5-[(5-phospho-1-deoxy-D-ribulos-1-ylimino)methylamino]-1-(5-phospho-beta-D-ribosyl)imidazole-4-carboxamide + L-glutamine = D-erythro-1-(imidazol-4-yl)glycerol 3-phosphate + 5-amino-1-(5-phospho-beta-D-ribosyl)imidazole-4-carboxamide + L-glutamate + H(+). The enzyme catalyses L-glutamine + H2O = L-glutamate + NH4(+). It functions in the pathway amino-acid biosynthesis; L-histidine biosynthesis; L-histidine from 5-phospho-alpha-D-ribose 1-diphosphate: step 5/9. Functionally, IGPS catalyzes the conversion of PRFAR and glutamine to IGP, AICAR and glutamate. The HisH subunit catalyzes the hydrolysis of glutamine to glutamate and ammonia as part of the synthesis of IGP and AICAR. The resulting ammonia molecule is channeled to the active site of HisF. The chain is Imidazole glycerol phosphate synthase subunit HisH from Salmonella choleraesuis (strain SC-B67).